The sequence spans 396 residues: Elongation factor Tu (396 aa).

The 197-residue stretch at 10–206 (KPHVNIGTIG…AVDESVPDPV (197 aa)) folds into the tr-type G domain. The interval 19 to 26 (GHVDHGKT) is G1. 19–26 (GHVDHGKT) is a GTP binding site. Residue Thr-26 coordinates Mg(2+). The G2 stretch occupies residues 62 to 66 (GITIN). Residues 83 to 86 (DAPG) are G3. Residues 83–87 (DAPGH) and 138–141 (NKSD) contribute to the GTP site. Positions 138–141 (NKSD) are G4. Residues 176–178 (SGL) form a G5 region.

The protein belongs to the TRAFAC class translation factor GTPase superfamily. Classic translation factor GTPase family. EF-Tu/EF-1A subfamily. In terms of assembly, monomer.

Its subcellular location is the cytoplasm. It carries out the reaction GTP + H2O = GDP + phosphate + H(+). Its function is as follows. GTP hydrolase that promotes the GTP-dependent binding of aminoacyl-tRNA to the A-site of ribosomes during protein biosynthesis. The sequence is that of Elongation factor Tu from Paenarthrobacter aurescens (strain TC1).